The following is a 188-amino-acid chain: Phosphoheptose isomerase (188 aa).

Positions 33–188 (VTASLRAGGK…CGLVEDALCS (156 aa)) constitute an SIS domain. 48–50 (NGG) is a binding site for substrate. Residues histidine 57 and glutamate 61 each coordinate Zn(2+). Substrate-binding positions include glutamate 61, 90-91 (ND), 116-118 (STS), serine 121, and glutamine 168. The Zn(2+) site is built by glutamine 168 and histidine 176.

Belongs to the SIS family. GmhA subfamily. In terms of assembly, homotetramer. Requires Zn(2+) as cofactor.

Its subcellular location is the cytoplasm. The enzyme catalyses 2 D-sedoheptulose 7-phosphate = D-glycero-alpha-D-manno-heptose 7-phosphate + D-glycero-beta-D-manno-heptose 7-phosphate. The protein operates within carbohydrate biosynthesis; D-glycero-D-manno-heptose 7-phosphate biosynthesis; D-glycero-alpha-D-manno-heptose 7-phosphate and D-glycero-beta-D-manno-heptose 7-phosphate from sedoheptulose 7-phosphate: step 1/1. Functionally, catalyzes the isomerization of sedoheptulose 7-phosphate in D-glycero-D-manno-heptose 7-phosphate. This Rhodospirillum rubrum (strain ATCC 11170 / ATH 1.1.1 / DSM 467 / LMG 4362 / NCIMB 8255 / S1) protein is Phosphoheptose isomerase.